Here is an 80-residue protein sequence, read N- to C-terminus: Acyl carrier protein (80 aa).

The 76-residue stretch at 4-79 (DEVKGQVYDI…DAINYIVEKK (76 aa)) folds into the Carrier domain. At S39 the chain carries O-(pantetheine 4'-phosphoryl)serine.

This sequence belongs to the acyl carrier protein (ACP) family. In terms of processing, 4'-phosphopantetheine is transferred from CoA to a specific serine of apo-ACP by AcpS. This modification is essential for activity because fatty acids are bound in thioester linkage to the sulfhydryl of the prosthetic group.

It localises to the cytoplasm. The protein operates within lipid metabolism; fatty acid biosynthesis. Carrier of the growing fatty acid chain in fatty acid biosynthesis. The protein is Acyl carrier protein of Chloroherpeton thalassium (strain ATCC 35110 / GB-78).